A 617-amino-acid chain; its full sequence is Glutamyl-tRNA(Gln) amidotransferase subunit B, mitochondrial (617 aa).

The N-terminal 56 residues, 1–56 (MPRIPTSVLGKYLLSGQISRQGCVGARQITRHSALPSAAVSVANSARLLHVSSETV), are a transit peptide targeting the mitochondrion. Positions 53–90 (SETVPPPPAQPVPLRKQLKDEAKKAKKQGKKKSKGDSQ) are disordered. Over residues 76–85 (KAKKQGKKKS) the composition is skewed to basic residues.

It belongs to the GatB/GatE family. GatB subfamily. As to quaternary structure, subunit of the heterotrimeric GatCAB amidotransferase (AdT) complex, composed of A, B and C subunits.

The protein resides in the mitochondrion. The enzyme catalyses L-glutamyl-tRNA(Gln) + L-glutamine + ATP + H2O = L-glutaminyl-tRNA(Gln) + L-glutamate + ADP + phosphate + H(+). In terms of biological role, allows the formation of correctly charged Gln-tRNA(Gln) through the transamidation of misacylated Glu-tRNA(Gln) in the mitochondria. The reaction takes place in the presence of glutamine and ATP through an activated gamma-phospho-Glu-tRNA(Gln). This Fusarium vanettenii (strain ATCC MYA-4622 / CBS 123669 / FGSC 9596 / NRRL 45880 / 77-13-4) (Fusarium solani subsp. pisi) protein is Glutamyl-tRNA(Gln) amidotransferase subunit B, mitochondrial.